A 93-amino-acid chain; its full sequence is Mammaglobin-A (93 aa).

The N-terminal stretch at 1–18 (MKLLMVLMLAALSQHCYA) is a signal peptide. N-linked (GlcNAc...) asparagine glycosylation is found at N53 and N68.

It belongs to the secretoglobin family. Lipophilin subfamily. Mammary gland specific. Over-expressed in breast cancer.

It is found in the secreted. The protein is Mammaglobin-A (SCGB2A2) of Homo sapiens (Human).